Consider the following 490-residue polypeptide: MVEDQRRQLMEEEDEERRLILEEQRRRMMRADRDEEEEEEEEEEEEEREEDDGRRSEDEMREDEPPGRRETSHAHIDLNMMRANAHLKEMMDKNRRFVSTRLEEPITQSPPLTNGSNHDNDHDPYLSHRAAHGGSPDLPHSYMKAAHPLIKKEDGIAKMEMDIGLKDEMKMGAGLEDRDGDKPQTEWSFEEQFKQLYELSTDSKRKEFLDDLFSYMQKRGTPVNRIPIMAKQVLDLYELYNLVVAKGGLVEVINKKQWREITKGLNLPASITSAAFTLRTQYMKYLYPYECEKKGLSSPSELQSAIDGNRREGRRPSYHSPHMHPRGPSLAYHHGLDLHTPSGSPPPTMIPHPSRIPTLPPRLSPSTSPIEDDHPVPLGFPRQGTLSHAAMLAELAERGSIPPPSKRSLLAEEHHHRLLQLQQQHLVMPTAHLKVSSARAHPENGMPLFEMRGDNSLVMSIELNSVLYQGVLYPRGGTRSSLDRDTSTPV.

Residues M1–R33 are compositionally biased toward basic and acidic residues. Disordered regions lie at residues M1–D77 and I106–S135. A compositionally biased stretch (acidic residues) spans D34–E50. Over residues D51 to I76 the composition is skewed to basic and acidic residues. The span at I106–N117 shows a compositional bias: polar residues. Residues D202–K294 form the ARID domain. Residues S298–P369 form a disordered region. Over residues P316 to P325 the composition is skewed to basic residues. The REKLES domain maps to A389–R479.

The protein resides in the nucleus. Its function is as follows. Transcription factor involved in skeletogenesis and oral ectoderm patterning. The protein is Protein dead ringer homolog (dri) of Strongylocentrotus purpuratus (Purple sea urchin).